The chain runs to 993 residues: MIIKNIKMENFRSHRNTSINFSKGITSIIGQNGSGKSSIFQAMNFALFAPRGNNFRIENLMQQGAASFSVELEFEMMGNTYLVKRKRFQHKTDDKLYVNGKLNAESASEINKKIEEILEIDNSVFSNAIYIKQGEIANLIQMTPRDRKEVIGKLLGIEKYEKASEKMNIVKKSYEETLLKLEGELTQEPEILENLEKLKNEVSESEILKEEILKKYENLEKLKLEKNSEILQMEEKFAENNQLKENLKDIISEIKNINLEIQNFKNSLNLVAEESKNISENEENYKKYLELELKIKELNNKLIGHKSNYESYNKLKTIEESLLKELGVLKESLKDNKKNPDELKENLKENDEKILILDKIKEKIKELEFIEKQIYEIKIHKKTVETLFDSVKIYDDSIKTFEELKTKKNSYENLLKEKFDLEKKLQNETDEKTKLISELTDFEKIEEKINLENELKEKYEDLSEKIDKLNEIVLKKESKISEYKNSKAELEKTKDSCHVCQSKITEEKKQELLEKYNSEIQNEQLSTESLKKQLEIILNKKEKMKVKLNEIDSFKLKYGELKEKKNYSLKVEESIIETTEKLNELTGKINEYSSLNDEISLIENKLKNLENDYKNCNYSSQFLTKNDESEFLTKKLELSKIIGDYDSSKIENEKKSLENLKDELKNTIYNLEREINLKKELKNIQNDISSKIGIVECYVKWETEKSDFENKLSECKENYEKYMESLAVLKNYSKTYSVEINNLNEFLNQKIAEKQQFCEKLLETRTEIEKNIQTVNYNPELHENAKRLYENILNEFNDILRTLERISSELKLKNENISYLNEKIQNLSNKKEEKKKIEEFKEYLDKIKREIFSKDGFQKYLREKYIPLIQRHTNQIFQEFELPYSHIQLKDDYSLIVDGLPVETLSGGEQIAVSLALRLGISKAVCNNIECIILDEPTAYLDEDRRKNLLNIFKNIKTINQMAIITHHQELEQIADNIVKVRKIGENSKVSLE.

ATP-binding positions include arginine 12, 32–38 (NGSGKSS), and glutamine 133. Coiled coils occupy residues 192 to 222 (LENL…LEKL) and 402 to 493 (EELK…LEKT). The Zinc-hook domain occupies 452–556 (ENELKEKYED…KLNEIDSFKL (105 aa)). The Zn(2+) site is built by cysteine 497 and cysteine 500. Coiled-coil stretches lie at residues 570–612 (KVEE…LEND), 646–677 (DSSK…EINL), and 702–731 (ETEK…VLKN).

The protein belongs to the SMC family. RAD50 subfamily. In terms of assembly, homodimer. Forms a heterotetramer composed of two Mre11 subunits and two Rad50 subunits. Zn(2+) serves as cofactor.

In terms of biological role, part of the Rad50/Mre11 complex, which is involved in the early steps of DNA double-strand break (DSB) repair. The complex may facilitate opening of the processed DNA ends to aid in the recruitment of HerA and NurA. Rad50 controls the balance between DNA end bridging and DNA resection via ATP-dependent structural rearrangements of the Rad50/Mre11 complex. This Methanococcus maripaludis (strain DSM 14266 / JCM 13030 / NBRC 101832 / S2 / LL) protein is DNA double-strand break repair Rad50 ATPase.